Consider the following 235-residue polypeptide: Zinc transporter ZIP9 (235 aa).

An N-linked (GlcNAc...) asparagine glycan is attached at N2. The next 4 helical transmembrane spans lie at 11-31, 75-95, 104-124, and 138-158; these read SCVP…CWWT, TTTL…GAAA, LIVF…LVSF, and HLLV…LGLS. N-linked (GlcNAc...) asparagine glycosylation is present at N169. 2 consecutive transmembrane segments (helical) span residues 172-192 and 214-234; these read GMAM…HVLP and LEVA…VGHQ.

This sequence belongs to the ZIP transporter (TC 2.A.5) family.

It localises to the golgi apparatus. The protein resides in the trans-Golgi network membrane. Its subcellular location is the cell membrane. The protein localises to the cytoplasm. It is found in the perinuclear region. It localises to the mitochondrion. The protein resides in the nucleus. The enzyme catalyses Zn(2+)(in) = Zn(2+)(out). Functionally, transports zinc ions across cell and organelle membranes into the cytoplasm and regulates intracellular zinc homeostasis. Participates in the zinc ions efflux out of the secretory compartments. Regulates intracellular zinc level, resulting in the enhancement of AKT1 and MAPK3/MAPK1 (Erk1/2) phosphorylation in response to the BCR activation. Also functions as a membrane androgen receptor that mediates, through a G protein, the non-classical androgen signaling pathway, characterized by the activation of MAPK3/MAPK1 (Erk1/2) and transcription factors CREB1 or ATF1. This pathway contributes to CLDN1 and CLDN5 expression and tight junction formation between adjacent Sertoli cells. Mediates androgen-induced vascular endothelial cell proliferation through activation of an inhibitory G protein leading to the AKT1 and MAPK3/MAPK1 (Erk1/2) activation which in turn modulate inhibition (phosphorylation) of GSK3B and CCND1 transcription. Moreover, has dual functions as a membrane-bound androgen receptor and as an androgen-dependent zinc transporter both of which are mediated through an inhibitory G protein (Gi) that mediates both MAP kinase and zinc signaling leading to the androgen-dependent apoptotic process. The protein is Zinc transporter ZIP9 of Macaca fascicularis (Crab-eating macaque).